The sequence spans 341 residues: Adhesion protein Bd37 (341 aa).

An N-terminal signal peptide occupies residues 1-21; that stretch reads MKTSKILNTAAICLLAMGFNG. 2 N-linked (GlcNAc...) asparagine glycosylation sites follow: Asn23 and Asn30. Cys26 and Cys307 are joined by a disulfide. Residues 36 to 75 form a disordered region; that stretch reads AAANPVVSTPGNDAQQAGTQQGGANSKSVPEQQPQQAAGE. The span at 49–59 shows a compositional bias: low complexity; the sequence is AQQAGTQQGGA. A compositionally biased stretch (polar residues) spans 60-75; the sequence is NSKSVPEQQPQQAAGE. Ser311 carries the GPI-anchor amidated serine lipid modification. Residues 312 to 341 constitute a propeptide, removed in mature form; the sequence is GQGSSPKKPSFAAVPSSLSAIVFGIIVSMF.

The signal sequence is cleaved. Post-translationally, glycosylated. In terms of processing, palmitoylated. Not myristoylated.

It is found in the cell membrane. It localises to the secreted. The protein localises to the vesicle. Binds to host erythrocytes. The polypeptide is Adhesion protein Bd37 (Babesia divergens).